Here is a 473-residue protein sequence, read N- to C-terminus: 3-isopropylmalate dehydratase large subunit (473 aa).

Residues Cys351, Cys414, and Cys417 each coordinate [4Fe-4S] cluster.

The protein belongs to the aconitase/IPM isomerase family. LeuC type 1 subfamily. As to quaternary structure, heterodimer of LeuC and LeuD. Requires [4Fe-4S] cluster as cofactor.

It carries out the reaction (2R,3S)-3-isopropylmalate = (2S)-2-isopropylmalate. It participates in amino-acid biosynthesis; L-leucine biosynthesis; L-leucine from 3-methyl-2-oxobutanoate: step 2/4. In terms of biological role, catalyzes the isomerization between 2-isopropylmalate and 3-isopropylmalate, via the formation of 2-isopropylmaleate. In Polaromonas sp. (strain JS666 / ATCC BAA-500), this protein is 3-isopropylmalate dehydratase large subunit.